The following is a 249-amino-acid chain: uncharacterized protein (249 aa).

This sequence belongs to the HAD-like hydrolase superfamily. CbbY/CbbZ/Gph/YieH family.

This is an uncharacterized protein from Schizosaccharomyces pombe (strain 972 / ATCC 24843) (Fission yeast).